The following is a 799-amino-acid chain: MFGFGIRQLRGYASKTDLSKIRNIGIIAHIDAGKTTTTERMLYYSGKTNRIGNVDQGDTVTDYLPQERSRGITIQSAAISFNWQNDHRINLIDTPGHVDFTFEVIKSLKVLDGCVTILDAVAGVEAQTEKVWKQSYGIPKICYINKMDRVGSGYSRTVKELMIKMNQRVVLANMPLFKLDPVTNEQVFEGVLDVVNMKALRWDSTDVNKVDIADIDKFDSSLLDELTKAREAMVETLSEFDENLVEHFLEDAEGDYLKVSPTILNSSIRKSTLSQDITPILCGSSFRNIGVQPLLDAVVNYLPSPLEAKFPELNEDIPISYDKRKGLLFDNNSEICVAFAFKVITDEIRGQLVFVRVYSGTLKNGHSVYNSTNGKTFKINKPVIMHANKTEDVQSLSAGEIGVLTGSTVFGRIETGDTLISHSMVKDGLKSIERKGNLNLKINPIIIPPPVFSVYIEPKTLGNRKAMEAALKILVTEDPSLHVSQDEETSQTLLSGMGELHLEIARDKLLNDLKAEVGIGKLMISYKETINSTTNPVIYQDDIGYKFTIQIEPLEGEEVRVDKDTATEAWYPLGVDNNYLIFEKSNKPGLGAVWKHQIPYDVVINTIKSSCLASFQRGGKIGGYALHSCAVRIKGDFEVPYDATSSNEILNITRKLIIKSLQALHESSYSLLEPIMDVEIVVNQKFMGEVIQDLTGHHKANILSIEDEHGLDYNNERSTLNFKDIVDSQYLPPDITLNLAKLDNGGDRCKVIKAEAPLKEMVSYSNKLRSLTEGRGMVYMNYHGMKKVTPERLDDVLQG.

In terms of domain architecture, tr-type G spans S19–L306. GTP-binding positions include A28–T35, D93–H97, and N145–D148.

Belongs to the TRAFAC class translation factor GTPase superfamily. Classic translation factor GTPase family. EF-G/EF-2 subfamily.

It is found in the mitochondrion. Its function is as follows. Mitochondrial GTPase that mediates the disassembly of ribosomes from messenger RNA at the termination of mitochondrial protein biosynthesis. Not involved in the GTP-dependent ribosomal translocation step during translation elongation. This Vanderwaltozyma polyspora (strain ATCC 22028 / DSM 70294 / BCRC 21397 / CBS 2163 / NBRC 10782 / NRRL Y-8283 / UCD 57-17) (Kluyveromyces polysporus) protein is Ribosome-releasing factor 2, mitochondrial.